The primary structure comprises 264 residues: Undecaprenyl-diphosphatase (264 aa).

The next 8 membrane-spanning stretches (helical) occupy residues 15-37 (GLTE…LLGF), 42-62 (AASF…VLYW), 84-104 (YLLF…HDFI), 108-128 (LFNP…ILIV), 143-163 (VTPK…WPGF), 182-202 (IAAE…TGYD), 217-237 (FLAV…KGFI), and 243-263 (LTLR…LFFW).

The protein belongs to the UppP family.

The protein resides in the cell inner membrane. It catalyses the reaction di-trans,octa-cis-undecaprenyl diphosphate + H2O = di-trans,octa-cis-undecaprenyl phosphate + phosphate + H(+). Functionally, catalyzes the dephosphorylation of undecaprenyl diphosphate (UPP). Confers resistance to bacitracin. This chain is Undecaprenyl-diphosphatase, found in Maridesulfovibrio salexigens (strain ATCC 14822 / DSM 2638 / NCIMB 8403 / VKM B-1763) (Desulfovibrio salexigens).